We begin with the raw amino-acid sequence, 177 residues long: ATP synthase subunit delta (177 aa).

This sequence belongs to the ATPase delta chain family. F-type ATPases have 2 components, F(1) - the catalytic core - and F(0) - the membrane proton channel. F(1) has five subunits: alpha(3), beta(3), gamma(1), delta(1), epsilon(1). F(0) has three main subunits: a(1), b(2) and c(10-14). The alpha and beta chains form an alternating ring which encloses part of the gamma chain. F(1) is attached to F(0) by a central stalk formed by the gamma and epsilon chains, while a peripheral stalk is formed by the delta and b chains.

It is found in the cell inner membrane. Its function is as follows. F(1)F(0) ATP synthase produces ATP from ADP in the presence of a proton or sodium gradient. F-type ATPases consist of two structural domains, F(1) containing the extramembraneous catalytic core and F(0) containing the membrane proton channel, linked together by a central stalk and a peripheral stalk. During catalysis, ATP synthesis in the catalytic domain of F(1) is coupled via a rotary mechanism of the central stalk subunits to proton translocation. In terms of biological role, this protein is part of the stalk that links CF(0) to CF(1). It either transmits conformational changes from CF(0) to CF(1) or is implicated in proton conduction. This is ATP synthase subunit delta from Neisseria meningitidis serogroup C (strain 053442).